A 170-amino-acid polypeptide reads, in one-letter code: Peptide deformylase (170 aa).

Residues cysteine 91 and histidine 133 each coordinate Fe cation. The active site involves glutamate 134. Position 137 (histidine 137) interacts with Fe cation.

The protein belongs to the polypeptide deformylase family. Requires Fe(2+) as cofactor.

It carries out the reaction N-terminal N-formyl-L-methionyl-[peptide] + H2O = N-terminal L-methionyl-[peptide] + formate. Functionally, removes the formyl group from the N-terminal Met of newly synthesized proteins. Requires at least a dipeptide for an efficient rate of reaction. N-terminal L-methionine is a prerequisite for activity but the enzyme has broad specificity at other positions. The protein is Peptide deformylase of Aliivibrio fischeri (strain ATCC 700601 / ES114) (Vibrio fischeri).